We begin with the raw amino-acid sequence, 120 residues long: Flagellar protein FliT (120 aa).

The required for homodimerization stretch occupies residues 1 to 50 (MERHQHLLSEYQQILTLSEQMLMLATVENWNTLVDLEMTYLKAVENTANI). The segment at 60–98 (LQELLRQKLRSILENEIEIKRLLQRRLDKLSELVGQSTR) is fliD binding.

Belongs to the FliT family. Homodimer. Interacts with FliD and FlhC.

It localises to the cytoplasm. The protein localises to the cytosol. Its function is as follows. Dual-function protein that regulates the transcription of class 2 flagellar operons and that also acts as an export chaperone for the filament-capping protein FliD. As a transcriptional regulator, acts as an anti-FlhDC factor; it directly binds FlhC, thus inhibiting the binding of the FlhC/FlhD complex to class 2 promoters, resulting in decreased expression of class 2 flagellar operons. As a chaperone, effects FliD transition to the membrane by preventing its premature polymerization, and by directing it to the export apparatus. The polypeptide is Flagellar protein FliT (Yersinia pestis (strain Pestoides F)).